A 556-amino-acid polypeptide reads, in one-letter code: Acetyl-coenzyme A thioesterase (556 aa).

The region spanning alanine 6–glycine 118 is the HotDog ACOT-type 1 domain. Lysine 34 carries the N6-succinyllysine modification. CoA is bound by residues threonine 54 to serine 56 and serine 83 to serine 85. The residue at position 97 (lysine 97) is an N6-succinyllysine. Arginine 145 contacts CoA. Residues lysine 160 and lysine 229 each carry the N6-succinyllysine modification. Residues methionine 180–glutamine 295 form the HotDog ACOT-type 2 domain. Residue lysine 235–arginine 237 participates in CoA binding. The region spanning glycine 341–aspartate 550 is the START domain.

Homodimer or homotetramer.

The protein localises to the cytoplasm. The protein resides in the cytosol. The catalysed reaction is acetyl-CoA + H2O = acetate + CoA + H(+). It carries out the reaction butanoyl-CoA + H2O = butanoate + CoA + H(+). The enzyme catalyses hexanoyl-CoA + H2O = hexanoate + CoA + H(+). It functions in the pathway lipid metabolism; fatty acid metabolism. Allosterically regulated by ATP (activator) and ADP (inhibitor). Cold labile, it dissociates into inactive monomers at low temperature. In terms of biological role, catalyzes the hydrolysis of acyl-CoAs into free fatty acids and coenzyme A (CoASH), regulating their respective intracellular levels. Preferentially hydrolyzes acetyl-CoA. This is Acetyl-coenzyme A thioesterase (Acot12) from Rattus norvegicus (Rat).